Reading from the N-terminus, the 577-residue chain is Heavy metal-associated isoprenylated plant protein 34 (577 aa).

The region spanning 9 to 72 (LQTCVLKVNV…KLSKSGKHAE (64 aa)) is the HMA domain. Residues Cys-20 and Cys-23 each coordinate a metal cation. Positions 77-87 (GGGGGGGGGKG) are enriched in gly residues. 2 disordered regions span residues 77-136 (GGGG…QPMQ) and 150-451 (AAHG…GPGG). Over residues 97-106 (NLNMGGNNKP) the composition is skewed to low complexity. Residues 118 to 129 (KAGGGGGGGQNH) are compositionally biased toward gly residues. Positions 168-177 (KDQKKSVKFA) are enriched in basic and acidic residues. Acidic residues predominate over residues 178–213 (DDEDDEFSEDDYDDEDFSEDDYDDDEFDDDEDDDDE). The span at 227–244 (HMPPNKMMMPNKMMPQMG) shows a compositional bias: low complexity. 2 stretches are compositionally biased toward gly residues: residues 245-254 (GHHGNGGGPK) and 266-281 (FKGG…GGGF). 2 stretches are compositionally biased toward basic and acidic residues: residues 294–326 (KNGK…KTDA) and 344–358 (NGDE…DGHG). Composition is skewed to gly residues over residues 379–392 (KKGG…GHGG) and 420–451 (GIGG…GPGG). The residue at position 574 (Cys-574) is a Cysteine methyl ester. A lipid anchor (S-farnesyl cysteine) is attached at Cys-574. Residues 575-577 (SIM) constitute a propeptide, removed in mature form.

It belongs to the HIPP family.

Its function is as follows. Heavy-metal-binding protein. The protein is Heavy metal-associated isoprenylated plant protein 34 of Arabidopsis thaliana (Mouse-ear cress).